The chain runs to 142 residues: Small ribosomal subunit protein bS6 (142 aa).

A disordered region spans residues 96–142 (VTGQSEMLKAEENRSERRERRERPEHDGSADGDDSDSDSDNSDNADE). The segment covering 103 to 124 (LKAEENRSERRERRERPEHDGS) has biased composition (basic and acidic residues). The span at 125 to 142 (ADGDDSDSDSDNSDNADE) shows a compositional bias: acidic residues.

The protein belongs to the bacterial ribosomal protein bS6 family.

Binds together with bS18 to 16S ribosomal RNA. In Pseudomonas fluorescens (strain Pf0-1), this protein is Small ribosomal subunit protein bS6.